The sequence spans 452 residues: tRNA modification GTPase MnmE (452 aa).

Arg-22, Glu-80, and Lys-119 together coordinate (6S)-5-formyl-5,6,7,8-tetrahydrofolate. The 163-residue stretch at 213-375 (GVRTVIVGKP…LENKIYEKFF (163 aa)) folds into the TrmE-type G domain. Residue Asn-223 coordinates K(+). Residues 223 to 228 (NSGKST), 242 to 248 (TDIPGTT), and 267 to 270 (DTAG) contribute to the GTP site. A Mg(2+)-binding site is contributed by Ser-227. Residues Thr-242, Ile-244, and Thr-247 each contribute to the K(+) site. Mg(2+) is bound at residue Thr-248. Lys-452 is a binding site for (6S)-5-formyl-5,6,7,8-tetrahydrofolate.

The protein belongs to the TRAFAC class TrmE-Era-EngA-EngB-Septin-like GTPase superfamily. TrmE GTPase family. As to quaternary structure, homodimer. Heterotetramer of two MnmE and two MnmG subunits. It depends on K(+) as a cofactor.

Its subcellular location is the cytoplasm. Its function is as follows. Exhibits a very high intrinsic GTPase hydrolysis rate. Involved in the addition of a carboxymethylaminomethyl (cmnm) group at the wobble position (U34) of certain tRNAs, forming tRNA-cmnm(5)s(2)U34. The protein is tRNA modification GTPase MnmE of Petrotoga mobilis (strain DSM 10674 / SJ95).